The following is a 161-amino-acid chain: SsrA-binding protein (161 aa).

It belongs to the SmpB family.

It is found in the cytoplasm. Required for rescue of stalled ribosomes mediated by trans-translation. Binds to transfer-messenger RNA (tmRNA), required for stable association of tmRNA with ribosomes. tmRNA and SmpB together mimic tRNA shape, replacing the anticodon stem-loop with SmpB. tmRNA is encoded by the ssrA gene; the 2 termini fold to resemble tRNA(Ala) and it encodes a 'tag peptide', a short internal open reading frame. During trans-translation Ala-aminoacylated tmRNA acts like a tRNA, entering the A-site of stalled ribosomes, displacing the stalled mRNA. The ribosome then switches to translate the ORF on the tmRNA; the nascent peptide is terminated with the 'tag peptide' encoded by the tmRNA and targeted for degradation. The ribosome is freed to recommence translation, which seems to be the essential function of trans-translation. The chain is SsrA-binding protein from Vibrio campbellii (strain ATCC BAA-1116).